The following is a 195-amino-acid chain: ATP-dependent Clp protease proteolytic subunit (195 aa).

S98 functions as the Nucleophile in the catalytic mechanism. The active site involves H123.

Belongs to the peptidase S14 family. In terms of assembly, fourteen ClpP subunits assemble into 2 heptameric rings which stack back to back to give a disk-like structure with a central cavity, resembling the structure of eukaryotic proteasomes.

Its subcellular location is the cytoplasm. The catalysed reaction is Hydrolysis of proteins to small peptides in the presence of ATP and magnesium. alpha-casein is the usual test substrate. In the absence of ATP, only oligopeptides shorter than five residues are hydrolyzed (such as succinyl-Leu-Tyr-|-NHMec, and Leu-Tyr-Leu-|-Tyr-Trp, in which cleavage of the -Tyr-|-Leu- and -Tyr-|-Trp bonds also occurs).. Cleaves peptides in various proteins in a process that requires ATP hydrolysis. Has a chymotrypsin-like activity. Plays a major role in the degradation of misfolded proteins. The protein is ATP-dependent Clp protease proteolytic subunit of Caldanaerobacter subterraneus subsp. tengcongensis (strain DSM 15242 / JCM 11007 / NBRC 100824 / MB4) (Thermoanaerobacter tengcongensis).